Here is a 424-residue protein sequence, read N- to C-terminus: Serine--tRNA ligase (424 aa).

L-serine is bound at residue 232-234 (TAE). Residue 263 to 265 (RQE) coordinates ATP. Glu-286 is an L-serine binding site. 350–353 (EIGS) provides a ligand contact to ATP. Residue Ser-386 participates in L-serine binding.

This sequence belongs to the class-II aminoacyl-tRNA synthetase family. Type-1 seryl-tRNA synthetase subfamily. Homodimer. The tRNA molecule binds across the dimer.

It is found in the cytoplasm. The enzyme catalyses tRNA(Ser) + L-serine + ATP = L-seryl-tRNA(Ser) + AMP + diphosphate + H(+). It catalyses the reaction tRNA(Sec) + L-serine + ATP = L-seryl-tRNA(Sec) + AMP + diphosphate + H(+). It participates in aminoacyl-tRNA biosynthesis; selenocysteinyl-tRNA(Sec) biosynthesis; L-seryl-tRNA(Sec) from L-serine and tRNA(Sec): step 1/1. In terms of biological role, catalyzes the attachment of serine to tRNA(Ser). Is also able to aminoacylate tRNA(Sec) with serine, to form the misacylated tRNA L-seryl-tRNA(Sec), which will be further converted into selenocysteinyl-tRNA(Sec). This chain is Serine--tRNA ligase, found in Onion yellows phytoplasma (strain OY-M).